Here is a 159-residue protein sequence, read N- to C-terminus: Phosphopantetheine adenylyltransferase (159 aa).

Ser9 is a binding site for substrate. ATP is bound by residues Ser9–Phe10 and His17. Lys41, Ile73, and Lys87 together coordinate substrate. ATP is bound by residues Gly88–Arg90, Glu98, and Trp122–Ser128.

It belongs to the bacterial CoaD family. As to quaternary structure, homohexamer. Mg(2+) serves as cofactor.

It is found in the cytoplasm. The enzyme catalyses (R)-4'-phosphopantetheine + ATP + H(+) = 3'-dephospho-CoA + diphosphate. It functions in the pathway cofactor biosynthesis; coenzyme A biosynthesis; CoA from (R)-pantothenate: step 4/5. Its function is as follows. Reversibly transfers an adenylyl group from ATP to 4'-phosphopantetheine, yielding dephospho-CoA (dPCoA) and pyrophosphate. The sequence is that of Phosphopantetheine adenylyltransferase from Nocardioides sp. (strain ATCC BAA-499 / JS614).